A 372-amino-acid chain; its full sequence is Putative glutamate--cysteine ligase 2 (372 aa).

This sequence belongs to the glutamate--cysteine ligase type 2 family. YbdK subfamily.

The enzyme catalyses L-cysteine + L-glutamate + ATP = gamma-L-glutamyl-L-cysteine + ADP + phosphate + H(+). Functionally, ATP-dependent carboxylate-amine ligase which exhibits weak glutamate--cysteine ligase activity. The sequence is that of Putative glutamate--cysteine ligase 2 from Gloeobacter violaceus (strain ATCC 29082 / PCC 7421).